The sequence spans 376 residues: Chaperone protein DnaJ (376 aa).

Residues 5-70 form the J domain; it reads DYYEVLGVAK…QKRAAYDQYG (66 aa). The CR-type zinc-finger motif lies at 136 to 214; it reads GYDTQIRVPS…CHGSGKVKET (79 aa). Zn(2+) contacts are provided by Cys-149, Cys-152, Cys-166, Cys-169, Cys-188, Cys-191, Cys-202, and Cys-205. CXXCXGXG motif repeat units lie at residues 149–156, 166–173, 188–195, and 202–209; these read CGVCHGSG, CPTCHGQG, CPKCHGTG, and CAHCHGSG.

This sequence belongs to the DnaJ family. Homodimer. Zn(2+) serves as cofactor.

Its subcellular location is the cytoplasm. Participates actively in the response to hyperosmotic and heat shock by preventing the aggregation of stress-denatured proteins and by disaggregating proteins, also in an autonomous, DnaK-independent fashion. Unfolded proteins bind initially to DnaJ; upon interaction with the DnaJ-bound protein, DnaK hydrolyzes its bound ATP, resulting in the formation of a stable complex. GrpE releases ADP from DnaK; ATP binding to DnaK triggers the release of the substrate protein, thus completing the reaction cycle. Several rounds of ATP-dependent interactions between DnaJ, DnaK and GrpE are required for fully efficient folding. Also involved, together with DnaK and GrpE, in the DNA replication of plasmids through activation of initiation proteins. The chain is Chaperone protein DnaJ from Burkholderia mallei (strain NCTC 10229).